The sequence spans 234 residues: Ribose-5-phosphate isomerase A (234 aa).

Substrate contacts are provided by residues 39–42 (TGST), 92–95 (DGAD), and 105–108 (KGGG). Catalysis depends on Glu114, which acts as the Proton acceptor. Lys132 is a substrate binding site.

This sequence belongs to the ribose 5-phosphate isomerase family. In terms of assembly, homodimer.

The catalysed reaction is aldehydo-D-ribose 5-phosphate = D-ribulose 5-phosphate. The protein operates within carbohydrate degradation; pentose phosphate pathway; D-ribose 5-phosphate from D-ribulose 5-phosphate (non-oxidative stage): step 1/1. Functionally, catalyzes the reversible conversion of ribose-5-phosphate to ribulose 5-phosphate. The sequence is that of Ribose-5-phosphate isomerase A from Albidiferax ferrireducens (strain ATCC BAA-621 / DSM 15236 / T118) (Rhodoferax ferrireducens).